Reading from the N-terminus, the 276-residue chain is MNFGGFIMGRFDEKIMLVTGATSGIGRAVAIRAAKEGATVVAVGRNEERGAAVVAAMEEAGGKGEFMKCDVSNKDAVKALFAEIQEKYGKLDVAVNNAGIVGASKTVEELEDDDWFQVIDANLNSCFFCCREEVKLMQPSGGAIVNVSSVAGMRGFPSAAAYVASKHAVSGLTKAVAVDYATKGITCNAICPAGTDTPLTERSSADIKTRMAEIAAQGKDPMEWLKNSMLSGKTETLQKKNATPEEQAATILYFASDEARHITGSIVASDGGFTTY.

NADP(+) is bound by residues 70-71, Asn-97, Tyr-162, and Lys-166; that span reads DV. Tyr-162 functions as the Proton acceptor in the catalytic mechanism.

The protein belongs to the short-chain dehydrogenases/reductases (SDR) family.

The catalysed reaction is 3-oxo-5beta-cholan-24-oate + NADPH + H(+) = isolithocholate + NADP(+). The enzyme catalyses 12alpha-hydroxy-3-oxo-5beta-cholan-24-oate + NADPH + H(+) = isodeoxycholate + NADP(+). It carries out the reaction 12alpha-hydroxy-3-oxo-5beta-cholan-24-oate + NADH + H(+) = isodeoxycholate + NAD(+). It catalyses the reaction 7alpha,12alpha-dihydroxy-3-oxo-5beta-cholan-24-oate + NADPH + H(+) = isocholate + NADP(+). The catalysed reaction is 3-oxochenodeoxycholate + NADPH + H(+) = isochenodeoxycholate + NADP(+). Involved in the modification of secondary bile acids into iso-bile acids (3beta-bile acids) via epimerization of the 3-OH group through a 3-oxo-intermediate. Catalyzes the reduction of 12-alpha-hydroxy-3-oxo-5-beta-cholan-24-oate (3-oxo-DCA) and 3-oxo-5-beta-cholan-24-oate (3-oxo-LCA) to yield isodeoxycholate (isoDCA) and isolithocholate (isoLCA), respectively. Is also able to catalyze the reduction of 3-dehydrocholate (3-oxo-CA or 7alpha,12alpha-dihydroxy-3-oxo-5beta-cholan-24-oate) and 7-alpha-hydroxy-3-oxo-5-beta-cholan-24-oate (3-oxo-CDCA), into isocholate (isoCA) and isochenodeoxycholate (isoCDCA), respectively. Accepts both NADPH and NADH as cosubstrates. The conversion of the abundant bile acid deoxycholate (DCA) into isoDCA by the gut bacterium R.gnavus favors the growth of the keystone commensal genus Bacteroides, since isoDCA is less cytotoxic than its parent compound, DCA; iso-bile acids have thus a potential role in modulating gut community composition. The sequence is that of 3beta-hydroxysteroid dehydrogenase from Mediterraneibacter gnavus (strain ATCC 29149 / DSM 114966 / JCM 6515 / VPI C7-9) (Ruminococcus gnavus).